The chain runs to 322 residues: MRGSSFPGFPSTVASHTLRIATRKSPLALWQAEYVASRLRAAHPDLRVELVGMTTRGDKLLDAPLAKVGGKGLFVKELEQGLLEGRADIAVHSMKDVPVEFPEGLHLAAILEREDPRDALVSHRYRSFAELPADARIGTSSLRRQCQIKCRLPGCSLYDLRGNVNTRLAKLDAGEFDAIVLASAGLKRLGFQERIAETLTPEQCLPAIGQGAIGVECRSTDTRTNALLVPLHHPPTAWCVLAERAMNRRLDGGCQVPIAGFAQLEGDTLSLRGLVGNPDGSGIIRAEAVGHPSTFEALGKRVAEHLLDQGADEILRRVYATP.

Cys-254 carries the S-(dipyrrolylmethanemethyl)cysteine modification.

Belongs to the HMBS family. As to quaternary structure, monomer. Dipyrromethane serves as cofactor.

It catalyses the reaction 4 porphobilinogen + H2O = hydroxymethylbilane + 4 NH4(+). Its pathway is porphyrin-containing compound metabolism; protoporphyrin-IX biosynthesis; coproporphyrinogen-III from 5-aminolevulinate: step 2/4. Its function is as follows. Tetrapolymerization of the monopyrrole PBG into the hydroxymethylbilane pre-uroporphyrinogen in several discrete steps. The chain is Porphobilinogen deaminase from Methylococcus capsulatus (strain ATCC 33009 / NCIMB 11132 / Bath).